The primary structure comprises 78 residues: Defensin-like protein 201 (78 aa).

The signal sequence occupies residues 1-22; that stretch reads MRNLINFAVLIMTIFIVSASGA. Disulfide bonds link cysteine 32-cysteine 78, cysteine 41-cysteine 61, cysteine 46-cysteine 71, and cysteine 50-cysteine 73.

It belongs to the DEFL family.

It is found in the secreted. The sequence is that of Defensin-like protein 201 from Arabidopsis thaliana (Mouse-ear cress).